Here is a 789-residue protein sequence, read N- to C-terminus: Ribosomal protein S6 kinase alpha-5 (789 aa).

The region spanning 39–308 (FELLKVLGTG…ADEIKQHPFF (270 aa)) is the Protein kinase 1 domain. Residues 45–53 (LGTGAYGKV) and lysine 71 contribute to the ATP site. Residue aspartate 167 is the Proton acceptor of the active site. Serine 202 bears the Phosphoserine; by autocatalysis mark. The AGC-kinase C-terminal domain occupies 309-377 (QNINWDDLAA…VAPSILFKRN (69 aa)). At serine 350 the chain carries Phosphoserine. Serine 366 and serine 371 each carry phosphoserine; by autocatalysis. The Protein kinase 2 domain occupies 416–677 (DLKEKPLGEG…MSSLRYNEWL (262 aa)). ATP-binding positions include 422-430 (LGEGSFSIC) and lysine 445. Aspartate 534 acts as the Proton acceptor in catalysis. 2 positions are modified to phosphothreonine: threonine 571 and threonine 690. The disordered stretch occupies residues 731-789 (AKRRKMKKTSTSTETRSSSSESSHSSSSHSHGKTTPTKTLQPTNPTDSNNPETIFQFSD). The span at 739-769 (TSTSTETRSSSSESSHSSSSHSHGKTTPTKT) shows a compositional bias: low complexity. A phosphoserine; by autocatalysis mark is found at serine 740, serine 742, and serine 748. A compositionally biased stretch (polar residues) spans 770-789 (LQPTNPTDSNNPETIFQFSD).

This sequence belongs to the protein kinase superfamily. AGC Ser/Thr protein kinase family. S6 kinase subfamily. The cofactor is Mg(2+). In terms of processing, ser-366 and Thr-571 phosphorylation is required for kinase activity. Ser-366 and Ser-202 are autophosphorylated by the C-terminal kinase domain, and their phosphorylation is essential for the catalytic activity of the N-terminal kinase domain. Phosphorylated at Ser-350, Thr-571 and Thr-690 by MAP kinases. Autophosphorylated at Ser-740, Ser-742 and Ser-748 by the N-terminal kinase domain. In terms of tissue distribution, widely expressed with high levels in heart, brain and placenta. Less abundant in lung, kidney and liver.

The protein resides in the nucleus. It carries out the reaction L-seryl-[protein] + ATP = O-phospho-L-seryl-[protein] + ADP + H(+). The catalysed reaction is L-threonyl-[protein] + ATP = O-phospho-L-threonyl-[protein] + ADP + H(+). Its activity is regulated as follows. Activated by phosphorylation at Ser-350, Thr-571 and Thr-690 by MAP kinases, and by further autophosphorylation of Ser-202, Ser-366 and Ser-371 by the activated C-terminal kinase domain. The active N-terminal kinase domain finally phosphorylates downstream substrates, as well as Ser-740, Ser-742 and Ser-748 in its own C-terminal region. Functionally, serine/threonine-protein kinase that is required for the mitogen or stress-induced phosphorylation of the transcription factors CREB1 and ATF1 and that contributes to gene activation by histone phosphorylation. Phosphorylates CREB1 and ATF1 in response to mitogenic or stress stimuli such as UV-C irradiation, epidermal growth factor (EGF) and anisomycin. Directly represses transcription via phosphorylation of 'Ser-1' of histone H2A. Phosphorylates 'Ser-10' of histone H3 in response to mitogenics, stress stimuli and EGF, which results in the transcriptional activation of several immediate early genes, including proto-oncogenes c-fos/FOS and c-jun/JUN. May also phosphorylate 'Ser-28' of histone H3. Mediates the mitogen- and stress-induced phosphorylation of high mobility group protein 1 (HMGN1/HMG14). In Gallus gallus (Chicken), this protein is Ribosomal protein S6 kinase alpha-5 (RPS6KA5).